The chain runs to 322 residues: tRNA (guanine-N(7)-)-methyltransferase (322 aa).

S-adenosyl-L-methionine is bound by residues glutamate 29, glutamate 55, and aspartate 105. Residue aspartate 105 is part of the active site. Substrate contacts are provided by lysine 109 and aspartate 141.

The protein belongs to the class I-like SAM-binding methyltransferase superfamily. TrmB family.

It carries out the reaction guanosine(46) in tRNA + S-adenosyl-L-methionine = N(7)-methylguanosine(46) in tRNA + S-adenosyl-L-homocysteine. Its pathway is tRNA modification; N(7)-methylguanine-tRNA biosynthesis. Catalyzes the formation of N(7)-methylguanine at position 46 (m7G46) in tRNA. In Deinococcus radiodurans (strain ATCC 13939 / DSM 20539 / JCM 16871 / CCUG 27074 / LMG 4051 / NBRC 15346 / NCIMB 9279 / VKM B-1422 / R1), this protein is tRNA (guanine-N(7)-)-methyltransferase.